The following is a 540-amino-acid chain: CUB domain-containing protein 2 (540 aa).

A signal peptide spans 1–22 (MLAEWGACLLLAVALLGPGLQA). Residues 23 to 516 (QAMEGVKCGG…VSMVAQDTSD (494 aa)) lie on the Extracellular side of the membrane. Cystine bridges form between Cys30–Cys56, Cys83–Cys106, Cys145–Cys171, Cys198–Cys218, Cys257–Cys283, and Cys314–Cys336. 3 consecutive CUB domains span residues 30–143 (CGGV…YQKD), 145–255 (CGGV…YFSG), and 257–373 (CQEV…YIGV). An N-linked (GlcNAc...) asparagine glycan is attached at Asn40. N-linked (GlcNAc...) asparagine glycosylation is present at Asn267. Residues Asn377, Asn435, and Asn436 are each glycosylated (N-linked (GlcNAc...) asparagine). Residues 517–537 (IVFLGLCILAGILMVIAIVVL) traverse the membrane as a helical segment. Residues 538–540 (MLL) are Cytoplasmic-facing.

It is found in the membrane. The polypeptide is CUB domain-containing protein 2 (CDCP2) (Homo sapiens (Human)).